A 101-amino-acid chain; its full sequence is DET1- and DDB1-associated protein 1 (101 aa).

The tract at residues 67 to 101 (NAAKKRDQDQLEIGETSAPPRKIARTDSQEMNEDT) is disordered.

Belongs to the DDA1 family. As to quaternary structure, component of numerous DCX (DDB1-CUL4-X-box) E3 ubiquitin-protein ligase complexes which consist of a core of DDB1, cullin-4 (CUL4A or CUL4B), DDA1 and RBX1.

It participates in protein modification; protein ubiquitination. In terms of biological role, functions as a component of numerous distinct DCX (DDB1-CUL4-X-box) E3 ubiquitin-protein ligase complexes which mediate the ubiquitination and subsequent proteasomal degradation of target proteins. In the DCX complexes, acts as a scaffolding subunit required to stabilize the complex. This Xenopus laevis (African clawed frog) protein is DET1- and DDB1-associated protein 1.